Consider the following 182-residue polypeptide: Isopentenyl-diphosphate Delta-isomerase (182 aa).

The Mn(2+) site is built by His25 and His32. Residues Leu30 to Met164 enclose the Nudix hydrolase domain. Cys67 is a catalytic residue. Cys67 is a binding site for Mg(2+). His69 is a binding site for Mn(2+). Residue Glu87 participates in Mg(2+) binding. Residues Glu114 and Glu116 each contribute to the Mn(2+) site. The active site involves Glu116.

This sequence belongs to the IPP isomerase type 1 family. In terms of assembly, homodimer. Requires Mg(2+) as cofactor. The cofactor is Mn(2+).

The protein localises to the cytoplasm. The catalysed reaction is isopentenyl diphosphate = dimethylallyl diphosphate. It functions in the pathway isoprenoid biosynthesis; dimethylallyl diphosphate biosynthesis; dimethylallyl diphosphate from isopentenyl diphosphate: step 1/1. In terms of biological role, catalyzes the 1,3-allylic rearrangement of the homoallylic substrate isopentenyl (IPP) to its highly electrophilic allylic isomer, dimethylallyl diphosphate (DMAPP). In Shigella boydii serotype 4 (strain Sb227), this protein is Isopentenyl-diphosphate Delta-isomerase.